Here is a 548-residue protein sequence, read N- to C-terminus: Putative ATP-dependent RNA helicase R290 (548 aa).

One can recognise a Helicase ATP-binding domain in the interval 38–206; sequence INKVINGEDV…CKVLQLKTNE (169 aa). An ATP-binding site is contributed by 51-58; the sequence is LMTSAGKS. Residues 150 to 153 carry the DEAH box motif; sequence DEAH. The region spanning 231 to 376 is the Helicase C-terminal domain; that stretch reads DIVPIINKYP…KTQLALLEQM (146 aa).

Belongs to the DEAD box helicase family. DEAH subfamily.

It catalyses the reaction ATP + H2O = ADP + phosphate + H(+). The polypeptide is Putative ATP-dependent RNA helicase R290 (Acanthamoeba polyphaga mimivirus (APMV)).